Consider the following 310-residue polypeptide: Vomeronasal type-1 receptor 3 (310 aa).

The Extracellular segment spans residues 1 to 5; that stretch reads MASKD. A helical membrane pass occupies residues 6–26; the sequence is FAIGMILSQIMVGFLGNFFLL. Residues 27–50 lie on the Cytoplasmic side of the membrane; sequence YHYSFLHFTRGMLQSTDLTLKHLT. A helical membrane pass occupies residues 51–71; it reads IANSLVILSKGIPQTMAAFGL. At 72–91 the chain is on the extracellular side; the sequence is KDSLSDIGCKFVFYVHRVGR. A helical transmembrane segment spans residues 92-112; it reads AVCTGNACLLSVFQVITISSS. Over 113–129 the chain is Cytoplasmic; it reads EFRWAELKLHAHKYIRS. Residues 130–150 form a helical membrane-spanning segment; it reads FILVLCWILNTLVNITVPLHV. Over 151–186 the chain is Extracellular; that stretch reads TGKWNSINSTKTNDYGYCSGGSRSRIPHSLHIVLLS. Residue N158 is glycosylated (N-linked (GlcNAc...) asparagine). A helical membrane pass occupies residues 187 to 207; the sequence is SLDVLCLGLMTLASGSMVFIL. Residues 208–235 are Cytoplasmic-facing; that stretch reads HRLKQQVQHIHGTNLSPRSSPESRVTQS. A helical membrane pass occupies residues 236–258; it reads ILVLVSTLCYFTRSPPSLHMSLF. The Extracellular segment spans residues 259 to 263; that stretch reads PNPSW. A helical transmembrane segment spans residues 264–284; it reads WPLNASALITACFPTVSPFVL. The Cytoplasmic segment spans residues 285 to 310; the sequence is MSRHPRIPRLGSACCGRNPQFPKLVR.

It belongs to the G-protein coupled receptor 1 family.

It is found in the cell membrane. Putative pheromone receptor. This is Vomeronasal type-1 receptor 3 (VN1R3) from Pan troglodytes (Chimpanzee).